Reading from the N-terminus, the 110-residue chain is Large ribosomal subunit protein uL22 (110 aa).

Over residues 85 to 95 (RGTASKIRKPT) the composition is skewed to basic residues. The segment at 85 to 110 (RGTASKIRKPTSHVMVEVSKAQKKEA) is disordered.

It belongs to the universal ribosomal protein uL22 family. In terms of assembly, part of the 50S ribosomal subunit.

In terms of biological role, this protein binds specifically to 23S rRNA; its binding is stimulated by other ribosomal proteins, e.g. L4, L17, and L20. It is important during the early stages of 50S assembly. It makes multiple contacts with different domains of the 23S rRNA in the assembled 50S subunit and ribosome. The globular domain of the protein is located near the polypeptide exit tunnel on the outside of the subunit, while an extended beta-hairpin is found that lines the wall of the exit tunnel in the center of the 70S ribosome. In Campylobacter curvus (strain 525.92), this protein is Large ribosomal subunit protein uL22.